A 428-amino-acid polypeptide reads, in one-letter code: Putative zinc finger protein 355P (428 aa).

A KRAB domain is found at 1-64 (MRDEVAEKEK…KHPGLTQHNI (64 aa)). 3 consecutive C2H2-type zinc fingers follow at residues 72–94 (YKCK…QRIH), 100–122 (YKCE…MRAH), and 128–150 (YKCE…KRIH). The C2H2-type 4; degenerate zinc-finger motif lies at 156–178 (YKFEECDKAFYWVLSFTKHMIIH). The C2H2-type 5; degenerate zinc finger occupies 184–206 (YKYQECGKAFKWSSNLTIHKRIH). A C2H2-type 6; degenerate zinc finger spans residues 212–234 (CKCEECGKACKQSLGLTIQKRIH). The C2H2-type 7; degenerate zinc-finger motif lies at 263–285 (YNCEKCGKAFYCSSNLIQNNIVH). 2 C2H2-type zinc fingers span residues 291 to 313 (YKCQ…KIIH) and 335 to 357 (YKCE…MIVH). The C2H2-type 10; degenerate zinc finger occupies 363–385 (YKCEECGKAFKWSSELTIHQRIR). The segment at 391–413 (YKCEECVRVFKHSSKLNEHKRNH) adopts a C2H2-type 11 zinc-finger fold.

Belongs to the krueppel C2H2-type zinc-finger protein family.

The protein localises to the nucleus. Functionally, may be involved in transcriptional regulation. This is Putative zinc finger protein 355P (ZNF355P) from Homo sapiens (Human).